A 518-amino-acid chain; its full sequence is Pumilio homolog 14 (518 aa).

Disordered regions lie at residues 26–46 and 77–114; these read TMASSSSQPQPISSPFHQPEN and VGQNGDSIHLPRRTNQVFTGSSSGGAGDDNGYLLPPMG. Low complexity predominate over residues 29–44; it reads SSSSQPQPISSPFHQP. A PUM-HD domain is found at 178-518; it reads YTNRFGYEGY…GNKVLEKLNI (341 aa). The Pumilio 1; degenerate repeat unit spans residues 206 to 235; it reads SAFAKDKEMSERLGMSIFQGTKETVDAIYN. 7 Pumilio repeats span residues 236–271, 275–313, 314–348, 349–387, 388–423, 424–459, and 460–494; these read GLIGDICELMVDPYGSDVVQLLMRRCSSEQIVQLVD, QQMFQFVNICIDSLGTNAIQVLLTCINERAKDQIPRIVD, VVRTVALQLSKSNHAIFVILACFRLFPLHCRLLLE, LIVQNCHQIAIDQHGCCLLQLCFNKDRVPNLEIRQRLIM, EAIANALRLCLNCYGNYVVQYIVELNNRYLIDALVR, QLIGNYAHLARNKYGSHAVQKLLKLRWIDSRVIVID, and LLREIDTLLLDPFGNYVIQTAWFVSKDDVRRMLRY.

It localises to the cytoplasm. The protein localises to the nucleus. Its function is as follows. Sequence-specific RNA-binding protein that regulates translation and mRNA stability by binding the 3'-UTR of target mRNAs. This Arabidopsis thaliana (Mouse-ear cress) protein is Pumilio homolog 14 (APUM14).